We begin with the raw amino-acid sequence, 61 residues long: MARKGLVERWKKPKKFKTREYTRCKICGRAHSVYREFGICRVCFRKMANEGKLPGVRKATW.

Residues Cys24, Cys27, Cys40, and Cys43 each contribute to the Zn(2+) site.

This sequence belongs to the universal ribosomal protein uS14 family. Zinc-binding uS14 subfamily. Part of the 30S ribosomal subunit. Contacts proteins S3 and S10. It depends on Zn(2+) as a cofactor.

Its function is as follows. Binds 16S rRNA, required for the assembly of 30S particles and may also be responsible for determining the conformation of the 16S rRNA at the A site. This chain is Small ribosomal subunit protein uS14, found in Thermosipho africanus (strain TCF52B).